The following is a 984-amino-acid chain: MKKIRQPIIAVLGHVDHGKCLLPEEKVVLPEIGLVTLRELFELANEVVVKDEEKEVRKLGKMLTGVDERGNVKLLNALYVWRVAHKGEMIRVKVNGWYSVTVTPEHPFLTNRGWVKAGELKEGDYIAIPRRVYGNEDLMKFSKIAKELGIKGDEKEFYLAGASLDIPIKVLFLAPSKLVSAFLRGYFDAKGVVRENYIEVPLFEDLPLLLLRFGIVSRIEKSTLKISGKRNLELFRKHVGFTDSEKAKALDELISKAKESERYPILEELRRLGLLFGFTRNELRIEENPTYEVLMEILERIERGSPNLAEKIAVLEGRIKEENYLRILEEEGLIENGKLTELGKELLEVWRNREFDSKDVDYVRNIVENLVFLPVEKVERIEYEGYVYDVTTETHNFVANGILVHNTTLLDRIRKTNVAAKEAGGITQHIGATEVPIDVVKEIAGPLIKLWKAEIKLPGLLFIDTPGHEAFTSLRARGGSLADLAVLVVDINEGFQPQTIESIEILRRYKTPFVVAANKIDRIKGWVIQEDEPFLLNSKRQDQRAIQELETKLWELIGKFYEFGFQANRFDRVQNFTRELAIVPISAKYGIGIAELLVLIAGLSQKYLEERLKIEVEGPARGTILEVREEPGLGHTIDVIIYEGTLHKDDTIVVGGKDKAIVTKVRALLKPKPLDEIRDPRFRFDYVDEVTAAAGVKIAAPGLEEALAGSPVIAAPTPEAVEKAKEEIMRQIQSVVISTDKMGVIIKADTLGSLEALSKELQEKGIPIRKADVGNISKTDVMEALSVREEDPKYGVIIGFNVKVNEDAQEIAKAKGVPIFVGNIIYKLIEDYEAWVKEEEEKKKRELLAKVTFPGVIRLYPDERYVFRRSNPAIVGIEVIEGRIKPGVTLIKQNGQKVGTIKSIKSRDEFLQEAKKGQAVAVAIEGAIVGRHIHPGETLYVDISRDDAITLLKYLRDVLEDSDIKALKIIAQIKAKEDPFWRAI.

A DOD-type homing endonuclease domain is found at 94–215; the sequence is VNGWYSVTVT…LPLLLLRFGI (122 aa). The region spanning 391–608 is the tr-type G domain; it reads TTETHNFVAN…LIAGLSQKYL (218 aa). Residues 464–468 and 518–521 contribute to the GTP site; these read DTPGH and NKID.

The protein belongs to the TRAFAC class translation factor GTPase superfamily. Classic translation factor GTPase family. IF-2 subfamily. This protein undergoes a protein self splicing that involves a post-translational excision of the intervening region (intein) followed by peptide ligation.

In terms of biological role, function in general translation initiation by promoting the binding of the formylmethionine-tRNA to ribosomes. Seems to function along with eIF-2. This chain is Probable translation initiation factor IF-2 (infB), found in Pyrococcus furiosus (strain ATCC 43587 / DSM 3638 / JCM 8422 / Vc1).